Consider the following 156-residue polypeptide: Transcription elongation factor GreA (156 aa).

Residues 1–32 (MKKVRLTREGYEKLKQELEELKRKFMYEISER) adopt a coiled-coil conformation.

The protein belongs to the GreA/GreB family.

Functionally, necessary for efficient RNA polymerase transcription elongation past template-encoded arresting sites. The arresting sites in DNA have the property of trapping a certain fraction of elongating RNA polymerases that pass through, resulting in locked ternary complexes. Cleavage of the nascent transcript by cleavage factors such as GreA or GreB allows the resumption of elongation from the new 3'terminus. GreA releases sequences of 2 to 3 nucleotides. This Thermotoga neapolitana (strain ATCC 49049 / DSM 4359 / NBRC 107923 / NS-E) protein is Transcription elongation factor GreA.